A 579-amino-acid polypeptide reads, in one-letter code: GPI alpha-1,2-mannosyltransferase 4 (579 aa).

Transmembrane regions (helical) follow at residues 131-151 (LLLTALSFALDGAVYHLAPPM), 156-173 (WNALALLSGSYVTLVFYT), 180-200 (IEGLLFTWLLVLVSSHVTWGP), 216-236 (LGGIVAAGFFNRPTFLAFAVV), 258-278 (ALVLLPGAALTAAVFVATDSW), 369-389 (YLLLLYFMPLALLSAFSHQEA), 391-411 (FLIPLLVPLVLLCSPQTQPVP), and 416-436 (VVLFNALGALLFGCLHQGGLV).

This sequence belongs to the glycosyltransferase 22 family. PIGZ subfamily. Widely expressed at low level, with highest level in brain and colon.

The protein localises to the endoplasmic reticulum membrane. Its pathway is glycolipid biosynthesis; glycosylphosphatidylinositol-anchor biosynthesis. Alpha-1,2-mannosyltransferase that catalyzes the transfer of the fourth mannose, via an alpha-1,2 bond, from a dolichol-phosphate-mannose (Dol-P-Man) to an alpha-D-Man-(1-&gt;2)-alpha-D-Man-(1-&gt;6)-2-PEtn-alpha-D-Man-(1-&gt;4)-alpha-D-GlcN-(1-&gt;6)-(1-radyl,2-acyl-sn-glycero-3-phospho)-2-acyl-inositol (also termed H6) intermediate and participates in the twelfth step of the glycosylphosphatidylinositol-anchor biosynthesis. The presence of a fourth mannose in GPI is facultative, suggesting that it only exists in some tissues. This is GPI alpha-1,2-mannosyltransferase 4 from Homo sapiens (Human).